The primary structure comprises 87 residues: Antitoxin RelB1 (87 aa).

In terms of biological role, antitoxin component of a type II toxin-antitoxin (TA) system. Neutralizes the effect of cognate toxin RelE1, but no other RelE or ParE toxin. This chain is Antitoxin RelB1 (relB1), found in Caulobacter vibrioides (strain ATCC 19089 / CIP 103742 / CB 15) (Caulobacter crescentus).